A 348-amino-acid chain; its full sequence is Neuronal growth regulator 1 (348 aa).

The first 31 residues, Met1 to Ser31, serve as a signal peptide directing secretion. Ig-like C2-type domains are found at residues Val32–Thr128, Pro133–Val215, and Pro219–Asn307. A disulfide bridge links Cys54 with Cys112. N-linked (GlcNAc...) asparagine glycosylation is found at Asn67 and Asn149. Disulfide bonds link Cys154-Cys197 and Cys239-Cys291. At Tyr181 the chain carries Phosphotyrosine. N-linked (GlcNAc...) asparagine glycosylation is found at Asn269, Asn280, Asn288, and Asn301. Gly318 is lipidated: GPI-anchor amidated glycine. Positions Ser319 to Gln348 are cleaved as a propeptide — removed in mature form.

This sequence belongs to the immunoglobulin superfamily. IgLON family. In terms of tissue distribution, expressed in brain.

The protein resides in the cell membrane. May be involved in cell-adhesion. May function as a trans-neural growth-promoting factor in regenerative axon sprouting in the mammalian brain. The sequence is that of Neuronal growth regulator 1 (Negr1) from Mus musculus (Mouse).